A 345-amino-acid chain; its full sequence is MSFDYINALLKKPTSRTPIWIMRQAGRYLPEYRATRAKAGDFLTLCKSPELACEVTMQPIDRFDLDAAILFSDILTIPDAMGLGLYFMEGEGPKFRNPIKNLKDIKKISTDLNNDLSYVFDGVSTIKKSLNNRVPLIGFSGSPWTLATYMIEGGGRIFASTKKMLFNDPEALHLLLMKLTKSVIAYLNQQIVSGADSVMVFDTWGGVLSEQNYLDFSLYYMAKIVKGVKAQHPNIPITLFSKNGGKYLTHIANTGCDGVGIDWTVELYQVQQEVGNKVAIQGNLDPAVLYATPEVIEREVKKVLSQFKGDTGYIFNLGHGITPDVDPENVKILVDCVHTFSKECR.

Residues 23-27 (RQAGR), Asp73, Tyr149, Thr203, and His319 each bind substrate.

The protein belongs to the uroporphyrinogen decarboxylase family. Homodimer.

It is found in the cytoplasm. The enzyme catalyses uroporphyrinogen III + 4 H(+) = coproporphyrinogen III + 4 CO2. The protein operates within porphyrin-containing compound metabolism; protoporphyrin-IX biosynthesis; coproporphyrinogen-III from 5-aminolevulinate: step 4/4. Catalyzes the decarboxylation of four acetate groups of uroporphyrinogen-III to yield coproporphyrinogen-III. This Vesicomyosocius okutanii subsp. Calyptogena okutanii (strain HA) protein is Uroporphyrinogen decarboxylase.